The sequence spans 203 residues: dITP/XTP pyrophosphatase (203 aa).

Serine 7–lysine 12 lines the substrate pocket. Residues glutamate 47 and aspartate 77 each contribute to the Mg(2+) site. Aspartate 77 acts as the Proton acceptor in catalysis. Substrate is bound by residues serine 78, phenylalanine 160 to aspartate 163, lysine 183, and histidine 188 to arginine 189.

Belongs to the HAM1 NTPase family. As to quaternary structure, homodimer. It depends on Mg(2+) as a cofactor.

It catalyses the reaction XTP + H2O = XMP + diphosphate + H(+). It carries out the reaction dITP + H2O = dIMP + diphosphate + H(+). The enzyme catalyses ITP + H2O = IMP + diphosphate + H(+). Its function is as follows. Pyrophosphatase that catalyzes the hydrolysis of nucleoside triphosphates to their monophosphate derivatives, with a high preference for the non-canonical purine nucleotides XTP (xanthosine triphosphate), dITP (deoxyinosine triphosphate) and ITP. Seems to function as a house-cleaning enzyme that removes non-canonical purine nucleotides from the nucleotide pool, thus preventing their incorporation into DNA/RNA and avoiding chromosomal lesions. This Opitutus terrae (strain DSM 11246 / JCM 15787 / PB90-1) protein is dITP/XTP pyrophosphatase.